Here is a 425-residue protein sequence, read N- to C-terminus: Serine--tRNA ligase (425 aa).

Residue 233–235 participates in L-serine binding; that stretch reads TAE. Residue 264 to 266 participates in ATP binding; the sequence is RRE. L-serine is bound at residue E287. An ATP-binding site is contributed by 351-354; sequence EISS. S385 contributes to the L-serine binding site.

The protein belongs to the class-II aminoacyl-tRNA synthetase family. Type-1 seryl-tRNA synthetase subfamily. In terms of assembly, homodimer. The tRNA molecule binds across the dimer.

The protein localises to the cytoplasm. The enzyme catalyses tRNA(Ser) + L-serine + ATP = L-seryl-tRNA(Ser) + AMP + diphosphate + H(+). The catalysed reaction is tRNA(Sec) + L-serine + ATP = L-seryl-tRNA(Sec) + AMP + diphosphate + H(+). It functions in the pathway aminoacyl-tRNA biosynthesis; selenocysteinyl-tRNA(Sec) biosynthesis; L-seryl-tRNA(Sec) from L-serine and tRNA(Sec): step 1/1. Catalyzes the attachment of serine to tRNA(Ser). Is also able to aminoacylate tRNA(Sec) with serine, to form the misacylated tRNA L-seryl-tRNA(Sec), which will be further converted into selenocysteinyl-tRNA(Sec). The polypeptide is Serine--tRNA ligase (Parasynechococcus marenigrum (strain WH8102)).